The sequence spans 241 residues: Type III pantothenate kinase (241 aa).

6 to 13 (DVGNTRIK) lines the ATP pocket. 94–97 (GIDR) lines the substrate pocket. Asp96 serves as the catalytic Proton acceptor. Asp117 lines the K(+) pocket. Thr120 is a binding site for ATP. Position 172 (Thr172) interacts with substrate.

Belongs to the type III pantothenate kinase family. In terms of assembly, homodimer. NH4(+) serves as cofactor. The cofactor is K(+).

Its subcellular location is the cytoplasm. It carries out the reaction (R)-pantothenate + ATP = (R)-4'-phosphopantothenate + ADP + H(+). The protein operates within cofactor biosynthesis; coenzyme A biosynthesis; CoA from (R)-pantothenate: step 1/5. Functionally, catalyzes the phosphorylation of pantothenate (Pan), the first step in CoA biosynthesis. The sequence is that of Type III pantothenate kinase from Flavobacterium psychrophilum (strain ATCC 49511 / DSM 21280 / CIP 103535 / JIP02/86).